Consider the following 95-residue polypeptide: Small ubiquitin-related modifier 2 (95 aa).

A Glycyl lysine isopeptide (Lys-Gly) (interchain with G-Cter in SUMO) cross-link involves residue K11. The 80-residue stretch at 16-95 (DHINLKVAGQ…VFQQQTGGSF (80 aa)) folds into the Ubiquitin-like domain. Residue G93 forms a Glycyl lysine isopeptide (Gly-Lys) (interchain with K-? in acceptor proteins) linkage. Positions 94–95 (SF) are excised as a propeptide.

It belongs to the ubiquitin family. SUMO subfamily. As to quaternary structure, interacts with sae2 and ube2i. Covalently attached to a number of proteins, including top2. In terms of processing, polymeric chains can be formed through Lys-11 cross-linking. Post-translationally, cleavage of precursor form by a sentrin-specific protease is necessary for function.

It localises to the nucleus. Ubiquitin-like protein that can be covalently attached to proteins as a monomer or as a lysine-linked polymer. Covalent attachment via an isopeptide bond to its substrates requires prior activation by the E1 complex sae1-sae2 and linkage to the E2 enzyme ube2i, and can be promoted by an E3 ligase such as pias1-4. This post-translational modification on lysine residues of proteins plays a crucial role in a number of cellular processes such as nuclear transport, DNA replication and repair, mitosis and signal transduction. Polymeric sumo2 chains are also susceptible to polyubiquitination which functions as a signal for proteasomal degradation of modified proteins. This Xenopus tropicalis (Western clawed frog) protein is Small ubiquitin-related modifier 2 (sumo2).